A 246-amino-acid polypeptide reads, in one-letter code: Probable transcriptional regulatory protein TM1040_1893 (246 aa).

A disordered region spans residues Met1 to Arg21.

The protein belongs to the TACO1 family.

Its subcellular location is the cytoplasm. This Ruegeria sp. (strain TM1040) (Silicibacter sp.) protein is Probable transcriptional regulatory protein TM1040_1893.